The chain runs to 143 residues: MFGRISTRALLRPAFTHRIPSVSLSRFLSTETKQAIESAIESAPVVLFMKGTPEFPQCGFSKATINMLGQQGVDPMKFAAYNVLEDAELREGVKEFSEWPTIPQLYVNKEFVGGCDIVMNMAQTGELAKLLEDADALVPEEEE.

Residues M1 to L28 constitute a mitochondrion transit peptide. The region spanning K33–V138 is the Glutaredoxin domain. Residue K50 coordinates glutathione. Residue C58 coordinates [2Fe-2S] cluster. Residues R90 to K94, I102, and C115 to D116 each bind glutathione.

The protein belongs to the glutaredoxin family. Monothiol subfamily. Homodimer.

It is found in the mitochondrion matrix. In terms of biological role, monothiol glutaredoxin involved in mitochondrial iron-sulfur (Fe/S) cluster transfer. Receives iron-sulfur clusters from scaffold protein ISU1 and mediates their transfer to apoproteins, to the 4Fe/FS cluster biosynthesis machinery, or export from mitochondrion. The chain is Monothiol glutaredoxin-5, mitochondrial (GRX5) from Lachancea kluyveri (Yeast).